The following is a 236-amino-acid chain: Small ribosomal subunit protein uS5 (236 aa).

Residues 61–124 enclose the S5 DRBM domain; sequence ENQEIIDIAL…NYAKLNIIEI (64 aa).

It belongs to the universal ribosomal protein uS5 family. Part of the 30S ribosomal subunit. Contacts protein S4.

With S4 and S12 plays an important role in translational accuracy. The protein is Small ribosomal subunit protein uS5 of Pyrococcus horikoshii (strain ATCC 700860 / DSM 12428 / JCM 9974 / NBRC 100139 / OT-3).